The chain runs to 355 residues: tRNA pseudouridine synthase D (355 aa).

The active-site Nucleophile is Asp84. In terms of domain architecture, TRUD spans Gly160–Leu306.

Belongs to the pseudouridine synthase TruD family.

The enzyme catalyses uridine(13) in tRNA = pseudouridine(13) in tRNA. Responsible for synthesis of pseudouridine from uracil-13 in transfer RNAs. This chain is tRNA pseudouridine synthase D, found in Pseudomonas aeruginosa (strain ATCC 15692 / DSM 22644 / CIP 104116 / JCM 14847 / LMG 12228 / 1C / PRS 101 / PAO1).